A 166-amino-acid polypeptide reads, in one-letter code: MISDDSDRFNPRDPKPANAGKPSKSAKRREARQLATQALYQWHMAKHSLNEIEAQFRVDNDFTDIDGAYFREILHGVPANKNEIDTALVPCLDLAIDELDPVELAVLRLSTWELLKRVDVPYRVVINEGIELAKVFGSTDGHKFVNGVLDKLAPRLREAEVKAFKR.

Residues 1 to 15 (MISDDSDRFNPRDPK) are compositionally biased toward basic and acidic residues. Residues 1–30 (MISDDSDRFNPRDPKPANAGKPSKSAKRRE) are disordered.

This sequence belongs to the NusB family.

In terms of biological role, involved in transcription antitermination. Required for transcription of ribosomal RNA (rRNA) genes. Binds specifically to the boxA antiterminator sequence of the ribosomal RNA (rrn) operons. This Pseudomonas fluorescens (strain ATCC BAA-477 / NRRL B-23932 / Pf-5) protein is Transcription antitermination protein NusB.